The following is a 1169-amino-acid chain: Polyamine-transporting ATPase 13A2 (1169 aa).

At 1-44 (MSADSSLLMGSTPPSYGTLTTGTSIDPLSSSASSVRLSGYCGSP) the chain is on the cytoplasmic side. Residues 45–65 (WRAIGYHAAVWMLAGIPWLLF) lie within the membrane without spanning it. The Cytoplasmic segment spans residues 66–225 (RWKPLWGVRL…ISIPVKSYLQ (160 aa)). The helical transmembrane segment at 226–246 (LLADEALNPYYGFQAFSIALW) threads the bilayer. The Lumenal segment spans residues 247–250 (LADH). The chain crosses the membrane as a helical span at residues 251–271 (YYWYALCIFLISAISICLALY). Topologically, residues 272 to 422 (KTRKQSLTLR…SFKFYKHSMK (151 aa)) are cytoplasmic. Residues 423–443 (FVAALSVLALLGTVYSIIILY) traverse the membrane as a helical segment. Over 444 to 458 (RNRVPVREIVIRALD) the chain is Lumenal. Residues 459–479 (LVTVVVPPALPAAMTVCTLYA) traverse the membrane as a helical segment. At 480 to 919 (QSRLRTQGIF…REGRCSLDTS (440 aa)) the chain is on the cytoplasmic side. D508 (4-aspartylphosphate intermediate) is an active-site residue. Mg(2+) is bound by residues D867 and D871. Residues 920-940 (FSVFKYMALYSLTQFISVLIL) form a helical membrane-spanning segment. At 941–946 (YTINTN) the chain is on the lumenal side. Residues 947-967 (LGDLQFLAIDLVITTTVAVLM) traverse the membrane as a helical segment. At 968 to 993 (SRTGPALTLVRARPPGALLSVPVLGS) the chain is on the cytoplasmic side. The chain crosses the membrane as a helical span at residues 994–1014 (LLLQVALVAGIQLGGYFLVIA). The Lumenal segment spans residues 1015-1037 (QPWFVPLNRTVPAPDNLPNYENT). The N-linked (GlcNAc...) asparagine glycan is linked to N1022. Residues 1038–1058 (VVFSLSGFQYLILAAAVSKGA) traverse the membrane as a helical segment. The Cytoplasmic portion of the chain corresponds to 1059–1069 (PFRQPLYTNVP). Residues 1070 to 1090 (FLVALALLGSVLVGLILVPGL) form a helical membrane-spanning segment. Residues 1091–1106 (LQGPLGLRNIVDSSFK) are Lumenal-facing. Residues 1107–1127 (LLLLGLVAFNFVGAFMLESVL) traverse the membrane as a helical segment. The Cytoplasmic portion of the chain corresponds to 1128-1169 (DQCLPACLRWLRPKRASKKQFKRLQQELAEHPWPTLPVGSVR).

This sequence belongs to the cation transport ATPase (P-type) (TC 3.A.3) family. Type V subfamily. In terms of assembly, interacts with MYCBP2; the interaction inhibits the ubiquitination of TSC2 by MYCBP2. Interacts with HDAC6; the interaction results in recruitment of HDAC6 to lysosomes to promote CTTN deacetylation. Post-translationally, autophosphorylated. Accumulates in an inactive autophosphorylated state and autophosphorylation is stimulated by phosphatidic acid and phosphatidylinositol 3,5-bisphosphate but not by Mn(2+) or Zn(2+). The presence of spermine results in a dose-dependent reduction in autophosphorylation.

It localises to the lysosome membrane. The protein resides in the late endosome membrane. Its subcellular location is the endosome. The protein localises to the multivesicular body membrane. It is found in the cytoplasmic vesicle. It localises to the autophagosome membrane. It carries out the reaction spermidine(out) + ATP + H2O = spermidine(in) + ADP + phosphate + H(+). The catalysed reaction is spermine(out) + ATP + H2O = spermine(in) + ADP + phosphate + H(+). With respect to regulation, accumulates in an inactive autophosphorylated state. The presence of spermine results in a dose-dependent reduction in autophosphorylation. In terms of biological role, ATPase which acts as a lysosomal polyamine exporter with high affinity for spermine. Also stimulates cellular uptake of polyamines and protects against polyamine toxicity. Plays a role in intracellular cation homeostasis and the maintenance of neuronal integrity. Contributes to cellular zinc homeostasis. Confers cellular protection against Mn(2+) and Zn(2+) toxicity and mitochondrial stress. Required for proper lysosomal and mitochondrial maintenance. Regulates the autophagy-lysosome pathway through the control of SYT11 expression at both transcriptional and post-translational levels. Facilitates recruitment of deacetylase HDAC6 to lysosomes to deacetylate CTTN, leading to actin polymerization, promotion of autophagosome-lysosome fusion and completion of autophagy. Promotes secretion of exosomes as well as secretion of SCNA via exosomes. Plays a role in lipid homeostasis. The sequence is that of Polyamine-transporting ATPase 13A2 from Mus musculus (Mouse).